Consider the following 506-residue polypeptide: Protein spinster homolog 1 (506 aa).

Positions 1 to 42 are disordered; sequence MSQADADITPFFADDNEGEGPVENGVGSPLPEDEEEESPSGV. Over residues 21-30 the composition is skewed to low complexity; it reads PVENGVGSPL. The next 12 helical transmembrane spans lie at 52-71, 87-107, 115-135, 149-169, 176-196, 207-227, 266-286, 310-330, 344-364, 373-393, 408-428, and 450-470; these read IVLC…VAGV, GLLQ…FGYL, LIMC…SFIG, VGVG…DLFV, MLSI…IVGS, WALR…MLVV, FGFT…PAFL, LIFG…GVQA, LVCA…IMFA, VFIF…ADIL, FQIV…IGVV, and LLCS…AVFI.

It belongs to the major facilitator superfamily. Spinster (TC 2.A.1.49) family. Expressed in yolk cells.

The protein resides in the lysosome membrane. It carries out the reaction a 1-acyl-sn-glycero-3-phosphocholine(out) + H(+)(out) = a 1-acyl-sn-glycero-3-phosphocholine(in) + H(+)(in). The catalysed reaction is a 1-acyl-sn-glycero-3-phosphoethanolamine(out) + H(+)(out) = a 1-acyl-sn-glycero-3-phosphoethanolamine(in) + H(+)(in). It catalyses the reaction a 1-O-(1Z-alkenyl)-sn-glycero-3-phosphocholine(out) + H(+)(out) = a 1-O-(1Z-alkenyl)-sn-glycero-3-phosphocholine(in) + H(+)(in). The enzyme catalyses a 1-O-(1Z-alkenyl)-sn-glycero-3-phosphoethanolamine(out) + H(+)(out) = a 1-O-(1Z-alkenyl)-sn-glycero-3-phosphoethanolamine(in) + H(+)(in). Functionally, mediates the rate-limiting, proton-dependent, lysosomal efflux of lysophospholipids. Selective for zwitterionic headgroups such as lysophosphatidylcholine (LPC) and lysophosphatidylethanolamine (LPE). Essential player in lysosomal homeostasis. Critical for embryogenesis. Involved in the regulation of developmental senescence. The chain is Protein spinster homolog 1 (spns1) from Danio rerio (Zebrafish).